The following is a 77-amino-acid chain: PTS system N-acetylglucosamine-specific EIIB component (77 aa).

A PTS EIIB type-1 domain is found at 2–77 (ASKAEKIVAG…PIAAEIEDMM (76 aa)). C24 (phosphocysteine intermediate; for EIIB activity) is an active-site residue.

The catalysed reaction is N(pros)-phospho-L-histidyl-[protein] + N-acetyl-D-glucosamine(out) = N-acetyl-D-glucosamine 6-phosphate(in) + L-histidyl-[protein]. Its function is as follows. The phosphoenolpyruvate-dependent sugar phosphotransferase system (sugar PTS), a major carbohydrate active transport system, catalyzes the phosphorylation of incoming sugar substrates concomitantly with their translocation across the cell membrane. This system is involved in N-acetylglucosamine (GlcNAc) transport. This chain is PTS system N-acetylglucosamine-specific EIIB component, found in Streptomyces coelicolor (strain ATCC BAA-471 / A3(2) / M145).